The following is a 163-amino-acid chain: UPF0478 protein SAB1599c (163 aa).

A helical membrane pass occupies residues 7–27 (IAGIIAAIAFLILCIGIVAVL).

The protein belongs to the UPF0478 family.

It localises to the cell membrane. In Staphylococcus aureus (strain bovine RF122 / ET3-1), this protein is UPF0478 protein SAB1599c.